The chain runs to 558 residues: MALKGQEDYIYLFKDSTHPVDFLDAFRTFYLDGLFTDITLQCPSGIIFHCHRAVLAACSNYFKAMFTADMKEKFKNKIKLSGIHHDILEGLVNYAYTSQIEITKRNVQSLLEAADLLQFLSVKKACERFLVRHLDIDNCIGMHSFAEFHVCPELEKESRRILCSKFKEVWQQEEFLEISLEKFLFILSRKNLSVWKEEAIIEPVIKWTAHDVENRIECLYNLLSYINIDIDPVYLKTALGLQRSCLLTENKIRSLIYNALNPMHKEISQRSTATMYIIGGYYWHPLSEVHIWDPLTNVWIQGAEIPDYTRESYGVTCLGPNIYVTGGYRTDNIEALDTVWIYNSESDEWTEGLPMLNARYYHCAVTLGGCVYALGGYRKGAPAEEAEFYDPLKEKWIPIANMIKGVGNATACVLHDVIYVIGGHCGYRGSCTYDKVQSYNSDINEWSLITSSPHPEYGLCSVPFENKLYLVGGQTTITECYDPEQNEWREIAPMMERRMECGAVIMNGCIYVTGGYSYSKGTYLQSIEKYDPDLNKWEIVGNLPSAMRSHGCVCVYNV.

Positions 36-104 (TDITLQCPSG…AYTSQIEITK (69 aa)) constitute a BTB domain. A BACK domain is found at 139-240 (CIGMHSFAEF…DPVYLKTALG (102 aa)). 6 Kelch repeats span residues 274 to 320 (TMYI…CLGP), 321 to 369 (NIYV…TLGG), 370 to 416 (CVYA…VLHD), 418 to 466 (IYVI…PFEN), 467 to 508 (KLYL…IMNG), and 510 to 557 (IYVT…CVYN).

This is Kelch-like protein 23 (KLHL23) from Homo sapiens (Human).